Reading from the N-terminus, the 373-residue chain is P2Y purinoceptor 2 (373 aa).

Topologically, residues 1–32 are extracellular; it reads MAADLEPWNSTINGTWEGDELGYKCRFNEDFK. 2 N-linked (GlcNAc...) asparagine glycosylation sites follow: Asn-9 and Asn-13. The chain crosses the membrane as a helical span at residues 33 to 59; sequence YVLLPVSYGVVCVLGLCLNVVALYIFL. Residues 60 to 70 lie on the Cytoplasmic side of the membrane; the sequence is CRLKTWNASTT. Residues 71-93 form a helical membrane-spanning segment; the sequence is YMFHLAVSDSLYAASLPLLVYYY. The Extracellular portion of the chain corresponds to 94 to 110; sequence ARGDHWPFSTVLCKLVR. Cys-106 and Cys-183 are joined by a disulfide. A helical transmembrane segment spans residues 111–129; the sequence is FLFYTNLYCSILFLTCISV. Topologically, residues 130–152 are cytoplasmic; that stretch reads HRCLGVLRPLHSLRWGRARYARR. Residues 153 to 172 traverse the membrane as a helical segment; the sequence is VAAVVWVLVLACQAPVLYFV. The Extracellular segment spans residues 173 to 194; that stretch reads TTSVRGTRITCHDTSARELFSH. A helical transmembrane segment spans residues 195-220; sequence FVAYSSVMLGLLFAVPFSVILVCYVL. Residues 221-246 lie on the Cytoplasmic side of the membrane; sequence MARRLLKPAYGTTGGLPRAKRKSVRT. A helical membrane pass occupies residues 247–269; that stretch reads IALVLAVFALCFLPFHVTRTLYY. Residues 270–287 lie on the Extracellular side of the membrane; it reads SFRSLDLSCHTLNAINMA. Residues 288-309 form a helical membrane-spanning segment; sequence YKITRPLASANSCLDPVLYFLA. Topologically, residues 310 to 373 are cytoplasmic; the sequence is GQRLVRFARD…AGSETKDIRL (64 aa). Positions 318-373 are disordered; the sequence is RDAKPPTEPTPSPQARRKLGLHRPNRTVRKDLSVSSDDSRRTESTPAGSETKDIRL. A compositionally biased stretch (basic residues) spans 332–344; it reads ARRKLGLHRPNRT. Positions 345–360 are enriched in basic and acidic residues; it reads VRKDLSVSSDDSRRTE.

Belongs to the G-protein coupled receptor 1 family. Spleen, testis, kidney, liver, lung, heart and brain.

It localises to the cell membrane. In terms of biological role, receptor for ATP and UTP coupled to G-proteins that activate a phosphatidylinositol-calcium second messenger system. The affinity range is UTP = ATP &gt; ATP-gamma-S &gt;&gt; 2-methylthio-ATP = ADP. This is P2Y purinoceptor 2 (P2ry2) from Mus musculus (Mouse).